The sequence spans 512 residues: NAD(P)H-quinone oxidoreductase chain 4, chloroplastic (512 aa).

The next 14 membrane-spanning stretches (helical) occupy residues 4 to 24 (VPWL…IPLL), 34 to 54 (WYAL…FGCY), 87 to 107 (IGLI…AWPV), 111 to 131 (PKLF…LFAS), 134 to 154 (ILLF…LLSM), 167 to 187 (FILY…TASL), 208 to 228 (GLEI…LPAF), 242 to 262 (HYST…YGFI), 274 to 294 (TVFA…AALV), 308 to 328 (SSVS…DLGL), 330 to 350 (GAML…FLAG), 374 to 396 (MFAM…GFVS), 417 to 437 (IITL…LSMV), and 462 to 482 (VFVL…PNFA).

This sequence belongs to the complex I subunit 4 family.

It is found in the plastid. It localises to the chloroplast thylakoid membrane. It catalyses the reaction a plastoquinone + NADH + (n+1) H(+)(in) = a plastoquinol + NAD(+) + n H(+)(out). The catalysed reaction is a plastoquinone + NADPH + (n+1) H(+)(in) = a plastoquinol + NADP(+) + n H(+)(out). The polypeptide is NAD(P)H-quinone oxidoreductase chain 4, chloroplastic (Zygnema circumcarinatum (Green alga)).